The chain runs to 279 residues: Thymidylate synthase (279 aa).

133–134 (RR) is a dUMP binding site. Cysteine 154 (nucleophile) is an active-site residue. Residues 178–181 (RSND), asparagine 189, and 219–221 (HIY) contribute to the dUMP site. Aspartate 181 serves as a coordination point for (6R)-5,10-methylene-5,6,7,8-tetrahydrofolate. Alanine 278 lines the (6R)-5,10-methylene-5,6,7,8-tetrahydrofolate pocket.

This sequence belongs to the thymidylate synthase family. Bacterial-type ThyA subfamily. As to quaternary structure, homodimer.

The protein resides in the cytoplasm. It catalyses the reaction dUMP + (6R)-5,10-methylene-5,6,7,8-tetrahydrofolate = 7,8-dihydrofolate + dTMP. The protein operates within pyrimidine metabolism; dTTP biosynthesis. In terms of biological role, catalyzes the reductive methylation of 2'-deoxyuridine-5'-monophosphate (dUMP) to 2'-deoxythymidine-5'-monophosphate (dTMP) while utilizing 5,10-methylenetetrahydrofolate (mTHF) as the methyl donor and reductant in the reaction, yielding dihydrofolate (DHF) as a by-product. This enzymatic reaction provides an intracellular de novo source of dTMP, an essential precursor for DNA biosynthesis. The chain is Thymidylate synthase from Streptococcus sanguinis (strain SK36).